The primary structure comprises 317 residues: 17-beta-hydroxysteroid dehydrogenase type 6 (317 aa).

The first 17 residues, 1–17 (MWFYLVTLVGLYYLLRW), serve as a signal peptide directing secretion. NAD(+) is bound at residue 33–57 (FITGCDSGFGNLLARQLDRRGMRVL). The N-linked (GlcNAc...) asparagine glycan is linked to Asn161. Substrate is bound at residue Ser164. Tyr176 (proton acceptor) is an active-site residue.

It belongs to the short-chain dehydrogenases/reductases (SDR) family. As to expression, detected in prostate, liver and kidney.

The protein resides in the microsome membrane. It is found in the endoplasmic reticulum membrane. The catalysed reaction is all-trans-retinol--[retinol-binding protein] + NAD(+) = all-trans-retinal--[retinol-binding protein] + NADH + H(+). The enzyme catalyses all-trans-retinol + NAD(+) = all-trans-retinal + NADH + H(+). It catalyses the reaction androsterone + NAD(+) = 5alpha-androstan-3,17-dione + NADH + H(+). It carries out the reaction testosterone + NAD(+) = androst-4-ene-3,17-dione + NADH + H(+). The catalysed reaction is 5alpha-androstane-3alpha,17beta-diol + NAD(+) = 17beta-hydroxy-5alpha-androstan-3-one + NADH + H(+). The enzyme catalyses 17beta-estradiol + NAD(+) = estrone + NADH + H(+). It catalyses the reaction 17beta-estradiol + NADP(+) = estrone + NADPH + H(+). It carries out the reaction 3alpha-hydroxy-5alpha-pregnan-20-one + NAD(+) = 5alpha-pregnane-3,20-dione + NADH + H(+). The catalysed reaction is 5alpha-androstane-3beta,17beta-diol + NAD(+) = 17beta-hydroxy-5alpha-androstan-3-one + NADH + H(+). The enzyme catalyses 3beta-hydroxy-5alpha-androstan-17-one + NAD(+) = 5alpha-androstan-3,17-dione + NADH + H(+). Competitively inhibited by 9-cis-retinoic acid and 13-cis-retinoic acid. Functionally, NAD-dependent oxidoreductase with broad substrate specificity that shows both oxidative and reductive activity (in vitro). Has retinol dehydrogenase activity towards all-trans-retinol (in vitro). Has 17-beta-hydroxysteroid dehydrogenase activity towards various steroids (in vitro). Converts 5-alpha-androstan-3-alpha,17-beta-diol to androsterone and estradiol to estrone (in vitro). Has 3-alpha-hydroxysteroid dehydrogenase activity towards androsterone (in vitro). This chain is 17-beta-hydroxysteroid dehydrogenase type 6 (Hsd17b6), found in Rattus norvegicus (Rat).